Reading from the N-terminus, the 408-residue chain is Histidine--tRNA ligase (408 aa).

The protein belongs to the class-II aminoacyl-tRNA synthetase family. As to quaternary structure, homodimer.

It localises to the cytoplasm. It carries out the reaction tRNA(His) + L-histidine + ATP = L-histidyl-tRNA(His) + AMP + diphosphate + H(+). In Wolbachia pipientis wMel, this protein is Histidine--tRNA ligase.